A 282-amino-acid polypeptide reads, in one-letter code: Cyclic AMP-dependent transcription factor ATF-5 (282 aa).

The segment at 1 to 21 (MSLLATLGLELDRALLPASGL) is required for protein stabilization induced by IL1B. Residue K29 is modified to N6-acetyllysine; by EP300. 2 disordered regions span residues 116–152 (FLDA…DLPQ) and 173–238 (EEVG…ALEG). The tract at residues 119–217 (APPLPPPSPP…GDRKQKKRDQ (99 aa)) is interaction with PTP4A1. Residues 120–140 (PPLPPPSPPPLPPPPLPPAPS) are compositionally biased toward pro residues. Over residues 141–150 (LPLSLPSFDL) the composition is skewed to low complexity. Residues 178–194 (PPLPPPQQPPPPSPPQP) are compositionally biased toward pro residues. Residues 208–271 (GDRKQKKRDQ…QYVKDLLIEV (64 aa)) form the bZIP domain. Positions 210–230 (RKQKKRDQNKSAALRYRQRKR) are basic motif. A leucine-zipper region spans residues 236-250 (LEGECQGLEARNREL). Position 256 is a phosphoserine (S256).

Belongs to the bZIP family. Binds DNA as a dimer. Interacts with PTP4A1/PRL-1. Interacts with CCND3, but not with CCND1 or CCND2. Interacts with HSPA1A or HSPA1B; the interaction protects ATF5 from degradation via proteasome-dependent and caspase-dependent processes. Interacts (via C-terminal region) with NPM1 (via C-terminal region); the interaction leads to loss of association between HSPA1A or HSPA1B and ATF5 and promotes ATF5 degradation via proteasome-dependent and caspase-dependent processes. Interacts with NLK; the interaction stabilizes ATF5 at the protein level in a kinase-independent manner. Interacts with alpha-tubulin, gamma-tubulin members TUBGCP2 and TUBGCP4, PCNT; the ATF5:PCNT:polyglutamylated tubulin (PGT) tripartite unites the mother centriole and the pericentriolar material (PCM) in the centrosome. Interacts with CEBPB and EP300; EP300 is required for ATF5 and CEBPB interaction and DNA binding. In terms of processing, ubiquitinated by CDC34 and UBE2B in order to be degraded by the proteasome. Cisplatin inhibits ubiquitination and proteasome-mediated degradation by inhibiting the interaction with CDC34. Ubiquitination and degradation by the proteasome are inhibited by NLK in a kinase-independent manner. Phosphorylated by NLK, probably at Ser-92, Thr-94, Ser-126 and Ser-190. Post-translationally, acetylated at Lys-29 by EP300, the acetylation enhances the interaction with CEBPB, DNA-binding and transactivation activity. In terms of tissue distribution, widely expressed with higher expression levels in liver.

It is found in the cytoplasm. It localises to the nucleus. The protein localises to the cytoskeleton. The protein resides in the microtubule organizing center. Its subcellular location is the centrosome. Functionally, transcription factor that either stimulates or represses gene transcription through binding of different DNA regulatory elements such as cAMP response element (CRE) (consensus: 5'-GTGACGT[AC][AG]-3'), ATF5-specific response element (ARE) (consensus: 5'-C[CT]TCT[CT]CCTT[AT]-3') but also the amino acid response element (AARE), present in many viral and cellular promoters. Critically involved, often in a cell type-dependent manner, in cell survival, proliferation, and differentiation. Its transcriptional activity is enhanced by CCND3 and slightly inhibited by CDK4. Important regulator of the cerebral cortex formation, functions in cerebral cortical neuroprogenitor cells to maintain proliferation and to block differentiation into neurons. Must be down-regulated in order for such cells to exit the cycle and differentiate. Participates in the pathways by which SHH promotes cerebellar granule neuron progenitor cells proliferation. Critical for survival of mature olfactory sensory neurons (OSN), directs expression of OSN-specific genes. May be involved in osteogenic differentiation. Promotes cell proliferation and survival by inducing the expression of EGR1 sinergistically with ELK1. Once acetylated by EP300, binds to ARE sequences on target genes promoters, such as BCL2 and EGR1. Plays an anti-apoptotic role through the transcriptional regulation of BCL2, this function seems to be cell type-dependent. Cooperates with NR1I3/CAR in the transcriptional activation of CYP2B6 in liver. In hepatic cells, represses CRE-dependent transcription and inhibits proliferation by blocking at G2/M phase. May act as a negative regulator of IL1B transduction pathway in liver. Upon IL1B stimulus, cooperates with NLK to activate the transactivation activity of C/EBP subfamily members. Besides its function of transcription factor, acts as a cofactor of CEBPB to activate CEBPA and promote adipocyte differentiation. Regulates centrosome dynamics in a cell-cycle- and centriole-age-dependent manner. Forms 9-foci symmetrical ring scaffold around the mother centriole to control centrosome function and the interaction between centrioles and pericentriolar material. The sequence is that of Cyclic AMP-dependent transcription factor ATF-5 (ATF5) from Homo sapiens (Human).